The primary structure comprises 1195 residues: Chromosome partition protein Smc (1195 aa).

33 to 40 is an ATP binding site; it reads PNGSGKSN. Coiled coils occupy residues 185–241, 273–348, and 380–528; these read GVAQ…RQEQ, DAAT…IQAL, and QYQQ…QETQ. In terms of domain architecture, SMC hinge spans 542–658; the sequence is PGVHGLVAQL…FERLDQARRY (117 aa). Residues 698-1043 are a coiled coil; the sequence is GESAEVRAIR…ELLLRIENFT (346 aa).

This sequence belongs to the SMC family. Homodimer.

It localises to the cytoplasm. Functionally, required for chromosome condensation and partitioning. The polypeptide is Chromosome partition protein Smc (Synechococcus sp. (strain ATCC 27144 / PCC 6301 / SAUG 1402/1) (Anacystis nidulans)).